A 489-amino-acid polypeptide reads, in one-letter code: Glycogen synthase (489 aa).

Arg-20 serves as a coordination point for ADP-alpha-D-glucose.

The protein belongs to the glycosyltransferase 1 family. Bacterial/plant glycogen synthase subfamily.

The catalysed reaction is [(1-&gt;4)-alpha-D-glucosyl](n) + ADP-alpha-D-glucose = [(1-&gt;4)-alpha-D-glucosyl](n+1) + ADP + H(+). The protein operates within glycan biosynthesis; glycogen biosynthesis. Its function is as follows. Synthesizes alpha-1,4-glucan chains using ADP-glucose. The sequence is that of Glycogen synthase from Pelodictyon phaeoclathratiforme (strain DSM 5477 / BU-1).